Reading from the N-terminus, the 294-residue chain is 4-hydroxy-tetrahydrodipicolinate synthase (294 aa).

Pyruvate is bound at residue Thr-45. The Proton donor/acceptor role is filled by Tyr-133. Residue Lys-162 is the Schiff-base intermediate with substrate of the active site. Val-204 provides a ligand contact to pyruvate.

Belongs to the DapA family. Homotetramer; dimer of dimers.

The protein resides in the cytoplasm. The catalysed reaction is L-aspartate 4-semialdehyde + pyruvate = (2S,4S)-4-hydroxy-2,3,4,5-tetrahydrodipicolinate + H2O + H(+). It participates in amino-acid biosynthesis; L-lysine biosynthesis via DAP pathway; (S)-tetrahydrodipicolinate from L-aspartate: step 3/4. Catalyzes the condensation of (S)-aspartate-beta-semialdehyde [(S)-ASA] and pyruvate to 4-hydroxy-tetrahydrodipicolinate (HTPA). This Bartonella bacilliformis (strain ATCC 35685 / KC583 / Herrer 020/F12,63) protein is 4-hydroxy-tetrahydrodipicolinate synthase.